Consider the following 114-residue polypeptide: Acetyltransferase At1g77540 (114 aa).

Thr2 carries the post-translational modification N-acetylthreonine. One can recognise an N-acetyltransferase domain in the interval 18–106 (KIVWNEGKRR…RNPSWKPLIH (89 aa)). CoA is bound by residues 52–55 (HTYV) and 61–66 (GLGLAS). Residue Cys87 is the Nucleophile of the active site. CoA-binding positions include 88-89 (SY), Thr93, and Arg97.

It localises to the peroxisome. Possesses in vitro histone acetyltransferase activity with histones H3 and H4. This Arabidopsis thaliana (Mouse-ear cress) protein is Acetyltransferase At1g77540.